The sequence spans 78 residues: UPF0291 protein ABC2165 (78 aa).

The tract at residues 56-78 (AKGNDVTPQKLKDSKAQKHKRLH) is disordered.

Belongs to the UPF0291 family.

It localises to the cytoplasm. The protein is UPF0291 protein ABC2165 of Shouchella clausii (strain KSM-K16) (Alkalihalobacillus clausii).